The following is a 206-amino-acid chain: Sclerostin domain-containing protein 1 (206 aa).

The signal sequence occupies residues 1–23; the sequence is MLPPAIHLSLIPLLCILMKNCLA. The segment at 42–62 is disordered; it reads AHPSSNSTLNQARNGGRHFSS. Over residues 43 to 62 the composition is skewed to polar residues; sequence HPSSNSTLNQARNGGRHFSS. An N-linked (GlcNAc...) asparagine glycan is attached at Asn47. Cystine bridges form between Cys75–Cys133, Cys89–Cys147, Cys100–Cys163, and Cys104–Cys165. Positions 75–170 constitute a CTCK domain; sequence CRELRSTKYI…TACKCKRYTR (96 aa). Asn173 carries an N-linked (GlcNAc...) asparagine glycan. Residues 176–206 form a disordered region; it reads SHNFESVSPAKPAQHHRERKRASKSSKHSLS. A compositionally biased stretch (basic residues) spans 188 to 206; sequence AQHHRERKRASKSSKHSLS.

The protein belongs to the sclerostin family. As to quaternary structure, interacts with BMP2, BMP4, BMP6 and BMP7 with high affinity. Highly expressed within the maximally sensitized/receptive endometrium. Weakly expressed in brain, kidney and the female reproductive tract. Expressed in the dermal papilla (DP) and at high level in the precortex of both anagen vibrissae and pelage follicles. Dynymic expression during the hair cycle.

Its subcellular location is the secreted. Directly antagonizes activity of BMP2, BMP4, BMP6 and BMP7 in a dose-dependent manner. May be involved in the onset of endometrial receptivity for implantation/sensitization for the decidual cell reaction. Enhances Wnt signaling and inhibits TGF-beta signaling. In Rattus norvegicus (Rat), this protein is Sclerostin domain-containing protein 1 (Sostdc1).